We begin with the raw amino-acid sequence, 311 residues long: tRNA dimethylallyltransferase (311 aa).

ATP is bound at residue Gly19 to Ser26. Residue Ser21–Ser26 coordinates substrate. Residues Asp44 to Ser47 form an interaction with substrate tRNA region.

The protein belongs to the IPP transferase family. As to quaternary structure, monomer. Mg(2+) is required as a cofactor.

It catalyses the reaction adenosine(37) in tRNA + dimethylallyl diphosphate = N(6)-dimethylallyladenosine(37) in tRNA + diphosphate. Functionally, catalyzes the transfer of a dimethylallyl group onto the adenine at position 37 in tRNAs that read codons beginning with uridine, leading to the formation of N6-(dimethylallyl)adenosine (i(6)A). This Helicobacter pylori (strain ATCC 700392 / 26695) (Campylobacter pylori) protein is tRNA dimethylallyltransferase.